Consider the following 197-residue polypeptide: MSSKEQKTPEGQAPEEIITEQHEEVEAVEPDASAEQVDPRDEKIANLEAQLTEAQNREREGVLRVKAEMENLRRRTELDVEKAHKFALEKFVNELLPVIDSLDRALEVADKANPDMTAMVEGLELTLKSMLDVVRKFGVEVVAETNVALDPNVHQAIAMVESEDVAAGNVLAVMQKGYTLNGRTIRAAMVTVAKAKG.

Residues 1–41 (MSSKEQKTPEGQAPEEIITEQHEEVEAVEPDASAEQVDPRD) form a disordered region.

It belongs to the GrpE family. Homodimer.

It localises to the cytoplasm. Its function is as follows. Participates actively in the response to hyperosmotic and heat shock by preventing the aggregation of stress-denatured proteins, in association with DnaK and GrpE. It is the nucleotide exchange factor for DnaK and may function as a thermosensor. Unfolded proteins bind initially to DnaJ; upon interaction with the DnaJ-bound protein, DnaK hydrolyzes its bound ATP, resulting in the formation of a stable complex. GrpE releases ADP from DnaK; ATP binding to DnaK triggers the release of the substrate protein, thus completing the reaction cycle. Several rounds of ATP-dependent interactions between DnaJ, DnaK and GrpE are required for fully efficient folding. The polypeptide is Protein GrpE (Enterobacter sp. (strain 638)).